A 709-amino-acid polypeptide reads, in one-letter code: Phosphomethylpyrimidine synthase (709 aa).

A compositionally biased stretch (polar residues) spans 1–13; the sequence is MNIRSNPDTTLPA. Disordered regions lie at residues 1-21 and 125-168; these read MNIR…PLPS and DAPA…GREQ. Residues Asn274, Met303, Tyr332, His368, 388–390, 429–432, and Glu468 contribute to the substrate site; these read SRG and DGLR. Residue His472 participates in Zn(2+) binding. Tyr495 is a substrate binding site. Position 536 (His536) interacts with Zn(2+). Residues Cys616, Cys619, and Cys624 each coordinate [4Fe-4S] cluster.

The protein belongs to the ThiC family. Homodimer. [4Fe-4S] cluster is required as a cofactor.

It catalyses the reaction 5-amino-1-(5-phospho-beta-D-ribosyl)imidazole + S-adenosyl-L-methionine = 4-amino-2-methyl-5-(phosphooxymethyl)pyrimidine + CO + 5'-deoxyadenosine + formate + L-methionine + 3 H(+). It participates in cofactor biosynthesis; thiamine diphosphate biosynthesis. In terms of biological role, catalyzes the synthesis of the hydroxymethylpyrimidine phosphate (HMP-P) moiety of thiamine from aminoimidazole ribotide (AIR) in a radical S-adenosyl-L-methionine (SAM)-dependent reaction. The chain is Phosphomethylpyrimidine synthase from Rhodopseudomonas palustris (strain BisB18).